Here is a 107-residue protein sequence, read N- to C-terminus: Iron-binding protein IscA (107 aa).

Fe cation contacts are provided by Cys35, Cys99, and Cys101.

Belongs to the HesB/IscA family. As to quaternary structure, homodimer; may form tetramers and higher multimers. Fe cation is required as a cofactor.

Its function is as follows. Is able to transfer iron-sulfur clusters to apo-ferredoxin. Multiple cycles of [2Fe2S] cluster formation and transfer are observed, suggesting that IscA acts catalytically. Recruits intracellular free iron so as to provide iron for the assembly of transient iron-sulfur cluster in IscU in the presence of IscS, L-cysteine and the thioredoxin reductase system TrxA/TrxB. The protein is Iron-binding protein IscA of Yersinia pestis bv. Antiqua (strain Angola).